The chain runs to 353 residues: Lipase ZK262.3 (353 aa).

The N-terminal stretch at 1–22 (MPKNLRFSVFLLFLLCINSVFG) is a signal peptide. N-linked (GlcNAc...) asparagine glycosylation is found at Asn32 and Asn64. Catalysis depends on Ser163, which acts as the Nucleophile. Catalysis depends on Asp221, which acts as the Charge relay system. Asn267 carries N-linked (GlcNAc...) asparagine glycosylation. A disulfide bond links Cys277 and Cys288. His306 serves as the catalytic Charge relay system.

It belongs to the AB hydrolase superfamily. Lipase family.

Its subcellular location is the secreted. In terms of biological role, probable lipase. In Caenorhabditis elegans, this protein is Lipase ZK262.3.